Consider the following 181-residue polypeptide: Photosystem I assembly protein Ycf4 (181 aa).

A run of 2 helical transmembrane segments spans residues Tyr19–Ser39 and Ile61–Leu81.

The protein belongs to the Ycf4 family.

The protein localises to the plastid. It localises to the chloroplast thylakoid membrane. In terms of biological role, seems to be required for the assembly of the photosystem I complex. This Thalassiosira pseudonana (Marine diatom) protein is Photosystem I assembly protein Ycf4.